We begin with the raw amino-acid sequence, 30 residues long: Cyclotide mela-5 (30 aa).

The segment at residues 1–30 is a cross-link (cyclopeptide (Gly-Asp)); sequence GSAIACGESCFKFKCYTPGCSCSYPICKKD. Cystine bridges form between Cys6-Cys20, Cys10-Cys22, and Cys15-Cys27.

In terms of processing, this is a cyclic peptide. Contains 3 disulfide bonds.

Functionally, probably participates in a plant defense mechanism (Potential). Binds to and induces leakage in phospholipd membranes, particularly ones containing 1-palmitoyl-2-oleophosphatidylethanolamine (POPE). The protein is Cyclotide mela-5 of Melicytus latifolius (Norfolk Island mahoe).